Here is a 1309-residue protein sequence, read N- to C-terminus: Tetratricopeptide repeat protein 41 (1309 aa).

6 TPR repeats span residues 399–432 (PQLE…KPCI), 651–684 (WIQE…SVRE), 817–851 (LTFL…SVQS), 859–892 (LKAQ…LLRF), 989–1024 (MSYF…KEKA), and 1042–1079 (SDTL…RAAH).

The protein resides in the cytoplasm. The polypeptide is Tetratricopeptide repeat protein 41 (Rattus norvegicus (Rat)).